Reading from the N-terminus, the 486-residue chain is Cytosol aminopeptidase (486 aa).

The Zn(2+) site is built by lysine 249 and aspartate 254. Residue lysine 261 is part of the active site. Aspartate 272, aspartate 331, and glutamate 333 together coordinate Zn(2+). Arginine 335 is an active-site residue.

Belongs to the peptidase M17 family. As to quaternary structure, homohexamer. Zn(2+) serves as cofactor.

Its subcellular location is the cytoplasm. It carries out the reaction Release of an N-terminal amino acid, Xaa-|-Yaa-, in which Xaa is preferably Leu, but may be other amino acids including Pro although not Arg or Lys, and Yaa may be Pro. Amino acid amides and methyl esters are also readily hydrolyzed, but rates on arylamides are exceedingly low.. The catalysed reaction is Release of N-terminal proline from a peptide.. In terms of biological role, presumably involved in the processing and regular turnover of intracellular proteins. Catalyzes the removal of unsubstituted N-terminal amino acids from various peptides. The chain is Cytosol aminopeptidase from Encephalitozoon cuniculi (strain GB-M1) (Microsporidian parasite).